A 256-amino-acid chain; its full sequence is 5'-nucleotidase SurE (256 aa).

A divalent metal cation-binding residues include Asp8, Asp9, Ser42, and Asn94.

It belongs to the SurE nucleotidase family. A divalent metal cation is required as a cofactor.

The protein localises to the cytoplasm. The catalysed reaction is a ribonucleoside 5'-phosphate + H2O = a ribonucleoside + phosphate. In terms of biological role, nucleotidase that shows phosphatase activity on nucleoside 5'-monophosphates. This Ehrlichia chaffeensis (strain ATCC CRL-10679 / Arkansas) protein is 5'-nucleotidase SurE.